The chain runs to 268 residues: Very-long-chain aldehyde decarbonylase GL1-8 (268 aa).

4 consecutive transmembrane segments (helical) span residues 26–46 (IGTF…SLLF), 70–90 (CVVR…ILSY), 107–127 (WTVV…IFYW), and 164–184 (ILFL…HLFT). Residues 114–249 (VLFFFVLEDF…FIYMDWLFGT (136 aa)) form the Fatty acid hydroxylase domain.

The protein belongs to the sterol desaturase family. Homodimer.

The protein localises to the endoplasmic reticulum membrane. The enzyme catalyses a long-chain fatty aldehyde + 2 NADPH + O2 + H(+) = a long-chain alkane + formate + 2 NADP(+) + H2O. Its function is as follows. Aldehyde decarbonylase involved in the conversion of aldehydes to alkanes. Core component of a very-long-chain alkane synthesis complex. This chain is Very-long-chain aldehyde decarbonylase GL1-8, found in Oryza sativa subsp. indica (Rice).